The chain runs to 185 residues: Elongation factor P (185 aa).

This sequence belongs to the elongation factor P family.

Its subcellular location is the cytoplasm. The protein operates within protein biosynthesis; polypeptide chain elongation. Its function is as follows. Involved in peptide bond synthesis. Stimulates efficient translation and peptide-bond synthesis on native or reconstituted 70S ribosomes in vitro. Probably functions indirectly by altering the affinity of the ribosome for aminoacyl-tRNA, thus increasing their reactivity as acceptors for peptidyl transferase. This Clostridium novyi (strain NT) protein is Elongation factor P.